Reading from the N-terminus, the 152-residue chain is MANKFVITWDNMQMYTRQLAEQLLPAEQWKGILAVSRGGLVPAAILARELNIRYVDTVCISSYDHDHQRDMTVVKAMEGDGEGFIIIDDLVDSGDTAVKLRQMYPKGKLVTVCAKPAGIDLVDAYVVDIPQDTWIEQPWDMAVTYVDPICKK.

Residues 37-38 (RG), Arg69, and 88-96 (DDLVDSGDT) each bind 5-phospho-alpha-D-ribose 1-diphosphate. Arg69 contributes to the GMP binding site. Asp89 serves as a coordination point for Mg(2+). Residues Asp92 and Ile135 each coordinate guanine. Residues Asp92 and Ile135 each coordinate xanthine. GMP-binding positions include 92 to 96 (DSGDT) and 134 to 135 (WI).

This sequence belongs to the purine/pyrimidine phosphoribosyltransferase family. XGPT subfamily. As to quaternary structure, homotetramer. Mg(2+) serves as cofactor.

It is found in the cell inner membrane. It carries out the reaction GMP + diphosphate = guanine + 5-phospho-alpha-D-ribose 1-diphosphate. The enzyme catalyses XMP + diphosphate = xanthine + 5-phospho-alpha-D-ribose 1-diphosphate. The catalysed reaction is IMP + diphosphate = hypoxanthine + 5-phospho-alpha-D-ribose 1-diphosphate. It functions in the pathway purine metabolism; GMP biosynthesis via salvage pathway; GMP from guanine: step 1/1. Its pathway is purine metabolism; XMP biosynthesis via salvage pathway; XMP from xanthine: step 1/1. Purine salvage pathway enzyme that catalyzes the transfer of the ribosyl-5-phosphate group from 5-phospho-alpha-D-ribose 1-diphosphate (PRPP) to the N9 position of the 6-oxopurines guanine and xanthine to form the corresponding ribonucleotides GMP (guanosine 5'-monophosphate) and XMP (xanthosine 5'-monophosphate), with the release of PPi. To a lesser extent, also acts on hypoxanthine. The protein is Xanthine-guanine phosphoribosyltransferase of Aliivibrio salmonicida (strain LFI1238) (Vibrio salmonicida (strain LFI1238)).